Consider the following 197-residue polypeptide: dITP/XTP pyrophosphatase (197 aa).

8–13 (TGNQGK) is a substrate binding site. Residue Asp69 is the Proton acceptor of the active site. Mg(2+) is bound at residue Asp69. Residues Ser70, 154 to 157 (FGYD), Lys177, and 182 to 183 (HR) each bind substrate.

Belongs to the HAM1 NTPase family. In terms of assembly, homodimer. Requires Mg(2+) as cofactor.

It carries out the reaction XTP + H2O = XMP + diphosphate + H(+). The catalysed reaction is dITP + H2O = dIMP + diphosphate + H(+). The enzyme catalyses ITP + H2O = IMP + diphosphate + H(+). Its function is as follows. Pyrophosphatase that catalyzes the hydrolysis of nucleoside triphosphates to their monophosphate derivatives, with a high preference for the non-canonical purine nucleotides XTP (xanthosine triphosphate), dITP (deoxyinosine triphosphate) and ITP. Seems to function as a house-cleaning enzyme that removes non-canonical purine nucleotides from the nucleotide pool, thus preventing their incorporation into DNA/RNA and avoiding chromosomal lesions. This Photobacterium profundum (strain SS9) protein is dITP/XTP pyrophosphatase.